Reading from the N-terminus, the 147-residue chain is Hemoglobin subunit beta-H1 (147 aa).

One can recognise a Globin domain in the interval His-3–His-147. His-64 and His-93 together coordinate heme b.

Belongs to the globin family. In terms of assembly, heterotetramer of two alpha chains and two beta chains. In terms of tissue distribution, red blood cells.

Functionally, this is an embryonic beta-type chain. The sequence is that of Hemoglobin subunit beta-H1 (Hbb-bh1) from Mus musculus (Mouse).